The primary structure comprises 224 residues: Putative adhesin A1C_06425 (224 aa).

A signal peptide spans 1–22; sequence MKKLLLIATTSATILSSSISFA.

In Rickettsia akari (strain Hartford), this protein is Putative adhesin A1C_06425.